We begin with the raw amino-acid sequence, 167 residues long: Transcription factor E (167 aa).

An HTH TFE/IIEalpha-type domain is found at 5 to 87 (ENPIHRAYLL…LWKICPESLD (83 aa)).

The protein belongs to the TFE family. Monomer. Interaction with RNA polymerase subunits RpoF and RpoE is necessary for Tfe stimulatory transcription activity. Able to interact with Tbp and RNA polymerase in the absence of DNA promoter. Interacts both with the preinitiation and elongation complexes.

Functionally, transcription factor that plays a role in the activation of archaeal genes transcribed by RNA polymerase. Facilitates transcription initiation by enhancing TATA-box recognition by TATA-box-binding protein (Tbp), and transcription factor B (Tfb) and RNA polymerase recruitment. Not absolutely required for transcription in vitro, but particularly important in cases where Tbp or Tfb function is not optimal. It dynamically alters the nucleic acid-binding properties of RNA polymerases by stabilizing the initiation complex and destabilizing elongation complexes. Seems to translocate with the RNA polymerase following initiation and acts by binding to the non template strand of the transcription bubble in elongation complexes. The chain is Transcription factor E from Methanothrix thermoacetophila (strain DSM 6194 / JCM 14653 / NBRC 101360 / PT) (Methanosaeta thermophila).